A 437-amino-acid polypeptide reads, in one-letter code: 26S proteasome regulatory subunit 4 homolog (437 aa).

Residues 1 to 47 (MGQGVSSGQDKKKKKGSNQKPKYEPPVQSKFGRKKRKGGPATAEKLP) form a disordered region. The N-myristoyl glycine moiety is linked to residue Gly-2. 223–230 (GAPGTGKT) serves as a coordination point for ATP. Residues Lys-234, Lys-255, and Lys-290 each participate in a glycyl lysine isopeptide (Lys-Gly) (interchain with G-Cter in ubiquitin) cross-link.

This sequence belongs to the AAA ATPase family.

The protein resides in the cytoplasm. It is found in the nucleus. The 26S proteasome is involved in the ATP-dependent degradation of ubiquitinated proteins. The regulatory (or ATPase) complex confers ATP dependency and substrate specificity to the 26S complex. Has ATPase activity. The protein is 26S proteasome regulatory subunit 4 homolog (RPT2) of Saccharomyces cerevisiae (strain ATCC 204508 / S288c) (Baker's yeast).